Here is a 181-residue protein sequence, read N- to C-terminus: Ribulose bisphosphate carboxylase small subunit, chloroplastic 2 (181 aa).

A chloroplast-targeting transit peptide spans methionine 1 to arginine 57.

Belongs to the RuBisCO small chain family. As to quaternary structure, heterohexadecamer of 8 large and 8 small subunits.

It is found in the plastid. Its subcellular location is the chloroplast. Its function is as follows. RuBisCO catalyzes two reactions: the carboxylation of D-ribulose 1,5-bisphosphate, the primary event in carbon dioxide fixation, as well as the oxidative fragmentation of the pentose substrate. Both reactions occur simultaneously and in competition at the same active site. Although the small subunit is not catalytic it is essential for maximal activity. In Solanum tuberosum (Potato), this protein is Ribulose bisphosphate carboxylase small subunit, chloroplastic 2.